A 334-amino-acid chain; its full sequence is tRNA uridine(34) hydroxylase (334 aa).

In terms of domain architecture, Rhodanese spans 123 to 217 (SDPDVILVDT…YLEEVKAEES (95 aa)). The active-site Cysteine persulfide intermediate is the C177.

Belongs to the TrhO family.

The catalysed reaction is uridine(34) in tRNA + AH2 + O2 = 5-hydroxyuridine(34) in tRNA + A + H2O. In terms of biological role, catalyzes oxygen-dependent 5-hydroxyuridine (ho5U) modification at position 34 in tRNAs. The polypeptide is tRNA uridine(34) hydroxylase (Shewanella baltica (strain OS195)).